A 98-amino-acid polypeptide reads, in one-letter code: MPLLRKYEIMILLTEEFNDSELKTWVFNYAKNLRKFSVCDISVISRGKHNLAYPIETKMKGNYIQLNFSSMPKYITNFSKTLKMDSNVLRFLVFNKQL.

Belongs to the bacterial ribosomal protein bS6 family.

It localises to the plastid. Its subcellular location is the chloroplast. Binds together with bS18 to 16S ribosomal RNA. The protein is Small ribosomal subunit protein bS6c of Phaeodactylum tricornutum (strain CCAP 1055/1).